The following is a 1273-amino-acid chain: Kinesin-like protein KIN-7O (1273 aa).

The Kinesin motor domain maps to 3–327 (RIHVSVRARP…LQFASRALRV (325 aa)). 79–86 (GQTNSGKT) is an ATP binding site. Residues 333-408 (VNEILTDAAL…QRERVLQEQA (76 aa)) are a coiled coil. The interval 452 to 474 (SEDQSNVLSRGSSLESARSERET) is disordered. Over residues 453 to 467 (EDQSNVLSRGSSLES) the composition is skewed to polar residues. Coiled coils occupy residues 602–674 (EAIL…ESEV) and 751–1023 (VQSS…MEEE).

Belongs to the TRAFAC class myosin-kinesin ATPase superfamily. Kinesin family. KIN-7 subfamily.

This Arabidopsis thaliana (Mouse-ear cress) protein is Kinesin-like protein KIN-7O.